A 1173-amino-acid chain; its full sequence is Thrombospondin-1 (1173 aa).

An N-terminal signal peptide occupies residues 1–18 (MKGIFLLLMLVMPQTHQA). Residues 22-224 (GNDDNSVFDL…LQNVRFVFGT (203 aa)) enclose the Laminin G-like domain. Residues 50-98 (HLVKGPDPSSPAYRIEDADLIPPLPEDKFQDLLDAIRADRGFILLATLR) are heparin-binding. N-linked (GlcNAc...) asparagine glycosylation is found at Asn-155 and Asn-158. The cysteines at positions 174 and 235 are disulfide-linked. Asn-250 and Asn-363 each carry an N-linked (GlcNAc...) asparagine glycan. Residues 319–376 (GVCLHNGVLHKNRDEWTVDSCTECTCQNSATICRKVSCPLMPCTNATIPDGECCPRCW) enclose the VWFC domain. 3 TSP type-1 domains span residues 382 to 432 (DDDW…QDCD), 438 to 493 (DGGW…DPCP), and 495 to 550 (NGQW…QDCP). Disulfide bonds link Cys-394/Cys-426, Cys-398/Cys-431, Cys-409/Cys-416, Cys-450/Cys-487, Cys-454/Cys-492, Cys-465/Cys-477, Cys-507/Cys-544, Cys-511/Cys-549, Cys-522/Cys-534, Cys-554/Cys-565, Cys-559/Cys-575, Cys-578/Cys-589, Cys-595/Cys-611, Cys-602/Cys-620, Cys-623/Cys-647, Cys-653/Cys-666, Cys-660/Cys-679, and Cys-681/Cys-692. An EGF-like 1 domain is found at 550 to 590 (PIDGCLSNPCFAGVKCTSFIDGSWKCGSCPPGYRGNGITCK). The region spanning 649–693 (PRNPCADGTHDCHKNARCIYLGHYSDPMFRCECRPGYAGNGIICG) is the EGF-like 2 domain. TSP type-3 repeat units follow at residues 694 to 729 (EDTD…NSGQ), 730 to 765 (EDYD…NPAQ), 766 to 788 (YDYD…NPDQ), 789 to 824 (ADTD…NVDQ), 825 to 847 (KDTD…NPEQ), 848 to 885 (TDSD…NANQ), 886 to 921 (ADHD…NPDQ), and 922 to 957 (TDTN…EIST). 2 N-linked (GlcNAc...) asparagine glycosylation sites follow: Asn-705 and Asn-711. 9 disulfides stabilise this stretch: Cys-708/Cys-716, Cys-721/Cys-741, Cys-757/Cys-777, Cys-780/Cys-800, Cys-816/Cys-836, Cys-839/Cys-859, Cys-877/Cys-897, Cys-913/Cys-933, and Cys-949/Cys-1170. The segment at 838–935 (NCPLEHNPEQ…GDGRGDACQY (98 aa)) is disordered. Residues 886–897 (ADHDKDGKGDAC) show a composition bias toward basic and acidic residues. Residues 929–931 (RGD) carry the Cell attachment site motif. The region spanning 961–1173 (RKFQMVPLDP…SDLKYECRDS (213 aa)) is the TSP C-terminal domain. Asn-1070 is a glycosylation site (N-linked (GlcNAc...) asparagine).

Belongs to the thrombospondin family. In terms of assembly, homotrimer; disulfide-linked.

It localises to the secreted. The protein localises to the cell surface. It is found in the extracellular space. The protein resides in the extracellular matrix. Its subcellular location is the endoplasmic reticulum. It localises to the sarcoplasmic reticulum. In terms of biological role, adhesive glycoprotein that mediates cell-to-cell and cell-to-matrix interactions. Can bind to fibrinogen, fibronectin, laminin, type V collagen and integrins alpha-V/beta-1, alpha-V/beta-3 and alpha-IIb/beta-3. May play a role in ER stress response. This Xenopus laevis (African clawed frog) protein is Thrombospondin-1 (thbs1).